A 1564-amino-acid chain; its full sequence is Abnormal spindle-like microcephaly-associated protein homolog (1564 aa).

31 IQ domains span residues 31–60, 220–251, 270–299, 293–322, 366–395, 389–420, 439–468, 462–491, 512–541, 535–566, 608–639, 658–687, 681–712, 731–762, 754–785, 804–835, 827–856, 877–908, 900–931, 949–980, 972–1003, 1022–1053, 1045–1076, 1095–1126, 1168–1199, 1304–1333, 1327–1358, 1377–1406, 1452–1483, 1474–1503, and 1500–1531; these read YLWA…MLKS, LKKN…VIIQ, TRSA…SVIK, ILTS…ATIK, MRES…AVIS, QRKA…IIIQ, VKKA…AAVK, QSVA…SIIK, AKAA…AAMK, EHQA…LVIQ, QHTC…LLIQ, TKAA…AAIT, CNTA…IIIQ, LKKT…TFIK, MHRA…IVIQ, ILKA…TLIQ, LRIA…ITRT, LRHS…TLIQ, MHIA…IWIQ, LQNA…AFIQ, MHRA…VVIQ, QRYS…ILIQ, MYFS…IFIQ, LRKA…VLIQ, QWHS…IIIQ, HTQA…AATR, MHLA…VIIQ, VQKS…EKMA, QSRA…RIQS, QKCA…QKRA, and QKRA…VVLQ.

Its subcellular location is the cytoplasm. It is found in the nucleus. Its function is as follows. Probable role in mitotic spindle regulation and coordination of mitotic processes. May have a preferential role in regulating neurogenesis. This is Abnormal spindle-like microcephaly-associated protein homolog (ASPM) from Ateles geoffroyi (Black-handed spider monkey).